A 381-amino-acid chain; its full sequence is 8-amino-7-oxononanoate synthase (381 aa).

Arg27 is a binding site for substrate. 105–106 (GY) is a pyridoxal 5'-phosphate binding site. Residue His130 participates in substrate binding. Residues Ser176, 201–204 (DEAH), and 232–235 (TLSK) each bind pyridoxal 5'-phosphate. Lys235 carries the N6-(pyridoxal phosphate)lysine modification. Residue Thr345 coordinates substrate.

It belongs to the class-II pyridoxal-phosphate-dependent aminotransferase family. BioF subfamily. In terms of assembly, homodimer. Pyridoxal 5'-phosphate is required as a cofactor.

The catalysed reaction is 6-carboxyhexanoyl-[ACP] + L-alanine + H(+) = (8S)-8-amino-7-oxononanoate + holo-[ACP] + CO2. It participates in cofactor biosynthesis; biotin biosynthesis. Catalyzes the decarboxylative condensation of pimeloyl-[acyl-carrier protein] and L-alanine to produce 8-amino-7-oxononanoate (AON), [acyl-carrier protein], and carbon dioxide. This Mycobacterium avium (strain 104) protein is 8-amino-7-oxononanoate synthase.